The chain runs to 347 residues: GMP reductase (347 aa).

108–131 (ADFEKTKQILDLNPALNFVCIDVA) serves as a coordination point for NADP(+). 2 residues coordinate K(+): glycine 181 and glycine 183. Cysteine 186 acts as the Thioimidate intermediate in catalysis. 216–239 (IVSDGGCTTPGDVAKAFGGGADFV) contributes to the NADP(+) binding site.

This sequence belongs to the IMPDH/GMPR family. GuaC type 1 subfamily. In terms of assembly, homotetramer.

The catalysed reaction is IMP + NH4(+) + NADP(+) = GMP + NADPH + 2 H(+). Functionally, catalyzes the irreversible NADPH-dependent deamination of GMP to IMP. It functions in the conversion of nucleobase, nucleoside and nucleotide derivatives of G to A nucleotides, and in maintaining the intracellular balance of A and G nucleotides. This chain is GMP reductase, found in Escherichia coli O7:K1 (strain IAI39 / ExPEC).